The chain runs to 347 residues: DNA-directed RNA polymerase subunit alpha (347 aa).

An alpha N-terminal domain (alpha-NTD) region spans residues 1–243 (MLIKQGDRLI…DQISVFINFD (243 aa)). The segment at 260–347 (FNEHLFKSID…EWKRKQQHEA (88 aa)) is alpha C-terminal domain (alpha-CTD).

Belongs to the RNA polymerase alpha chain family. In terms of assembly, homodimer. The RNAP catalytic core consists of 2 alpha, 1 beta, 1 beta' and 1 omega subunit. When a sigma factor is associated with the core the holoenzyme is formed, which can initiate transcription.

It carries out the reaction RNA(n) + a ribonucleoside 5'-triphosphate = RNA(n+1) + diphosphate. Its function is as follows. DNA-dependent RNA polymerase catalyzes the transcription of DNA into RNA using the four ribonucleoside triphosphates as substrates. The protein is DNA-directed RNA polymerase subunit alpha of Nitratidesulfovibrio vulgaris (strain ATCC 29579 / DSM 644 / CCUG 34227 / NCIMB 8303 / VKM B-1760 / Hildenborough) (Desulfovibrio vulgaris).